Consider the following 593-residue polypeptide: Protein PSP2 (593 aa).

Positions 56 to 65 (AGEHQRDGHQ) are enriched in basic and acidic residues. A disordered region spans residues 56–101 (AGEHQRDGHQQHPHGGHGPMNRSRFSNAGPFGGGSMGDFANHHHPL). Phosphoserine is present on residues S150 and S238. Disordered regions lie at residues 227-248 (KPFITKTQRSKSNPFGSAKPVD) and 280-593 (DSMA…DMPL). Composition is skewed to polar residues over residues 231–241 (TKTQRSKSNPF) and 280–290 (DSMATTATGSK). S340 carries the phosphoserine modification. Residues 347–402 (SKPDKSDEFKGGDEQGFEKGGDDKAQLDVSNDKDKGSETDVDKQFTFKNVEREHSM) are compositionally biased toward basic and acidic residues. Residues 408–426 (NGNHNNNNGNFRGSNRYRG) show a composition bias toward low complexity. An omega-N-methylarginine mark is found at R419, R425, and R440. At R443 the chain carries Dimethylated arginine. R447 is subject to Omega-N-methylarginine. The segment covering 449–477 (GSSYNNNNNNTNDNNNNNNNSSSNNNNGS) has biased composition (low complexity). 2 stretches are compositionally biased toward polar residues: residues 486 to 497 (EEGLTSDSSLDA) and 505 to 516 (FTNSTSNTQQYS). The residue at position 522 (S522) is a Phosphoserine. Residues 534 to 545 (RNNGRGNYNSSG) show a composition bias toward low complexity. Omega-N-methylarginine is present on residues R538, R551, and R575. Residues 546–563 (MNGGSRGRGFGRGRGFGR) are compositionally biased toward gly residues. Residues 578-587 (SGNYSNYNNR) are compositionally biased toward low complexity.

Its subcellular location is the cytoplasm. The protein localises to the P-body. The protein resides in the stress granule. Its function is as follows. DNA polymerase alpha mutation suppressor. Suppressor of group II intron splicing defects of a mutation in MRS2. May play a role in mitochondrial mRNA splicing. This Saccharomyces cerevisiae (strain ATCC 204508 / S288c) (Baker's yeast) protein is Protein PSP2.